The chain runs to 290 residues: Acetylglutamate kinase (290 aa).

Substrate contacts are provided by residues 60–61 (GG), Arg82, and Asn187.

It belongs to the acetylglutamate kinase family. ArgB subfamily.

Its subcellular location is the cytoplasm. The catalysed reaction is N-acetyl-L-glutamate + ATP = N-acetyl-L-glutamyl 5-phosphate + ADP. The protein operates within amino-acid biosynthesis; L-arginine biosynthesis; N(2)-acetyl-L-ornithine from L-glutamate: step 2/4. Its function is as follows. Catalyzes the ATP-dependent phosphorylation of N-acetyl-L-glutamate. The chain is Acetylglutamate kinase from Marinobacter nauticus (strain ATCC 700491 / DSM 11845 / VT8) (Marinobacter aquaeolei).